Here is a 330-residue protein sequence, read N- to C-terminus: Ketol-acid reductoisomerase (NADP(+)) (330 aa).

Positions 2-181 (MEKYHETDAD…GATRAVVLET (180 aa)) constitute a KARI N-terminal Rossmann domain. NADP(+)-binding positions include 25–28 (YGSQ), Arg48, Ser52, and 82–85 (DENQ). Residue His107 is part of the active site. NADP(+) is bound at residue Gly133. The KARI C-terminal knotted domain occupies 182-327 (TFREETETDL…SELRAMMPQF (146 aa)). The Mg(2+) site is built by Asp190, Glu194, Glu226, and Glu230. Residue Ser251 participates in substrate binding.

Belongs to the ketol-acid reductoisomerase family. Mg(2+) serves as cofactor.

The catalysed reaction is (2R)-2,3-dihydroxy-3-methylbutanoate + NADP(+) = (2S)-2-acetolactate + NADPH + H(+). The enzyme catalyses (2R,3R)-2,3-dihydroxy-3-methylpentanoate + NADP(+) = (S)-2-ethyl-2-hydroxy-3-oxobutanoate + NADPH + H(+). It functions in the pathway amino-acid biosynthesis; L-isoleucine biosynthesis; L-isoleucine from 2-oxobutanoate: step 2/4. The protein operates within amino-acid biosynthesis; L-valine biosynthesis; L-valine from pyruvate: step 2/4. Functionally, involved in the biosynthesis of branched-chain amino acids (BCAA). Catalyzes an alkyl-migration followed by a ketol-acid reduction of (S)-2-acetolactate (S2AL) to yield (R)-2,3-dihydroxy-isovalerate. In the isomerase reaction, S2AL is rearranged via a Mg-dependent methyl migration to produce 3-hydroxy-3-methyl-2-ketobutyrate (HMKB). In the reductase reaction, this 2-ketoacid undergoes a metal-dependent reduction by NADPH to yield (R)-2,3-dihydroxy-isovalerate. The polypeptide is Ketol-acid reductoisomerase (NADP(+)) (Methanocorpusculum labreanum (strain ATCC 43576 / DSM 4855 / Z)).